A 412-amino-acid chain; its full sequence is Putative competence-damage inducible protein (412 aa).

It belongs to the CinA family.

This chain is Putative competence-damage inducible protein, found in Bacillus cytotoxicus (strain DSM 22905 / CIP 110041 / 391-98 / NVH 391-98).